We begin with the raw amino-acid sequence, 210 residues long: MKIVEVRHPLVQHKIGLMRNAALSTKDFRELANELGTLLAYEATADLETEPHTLPGWAGPITVQRIAGAKITVVPILRAGLGMLSGVLSLIPAARVSVVGLQRDEETLQPVPYFERLTGRLEERDALILDPMLATGGTLIATIDMLKRAGARRIKGIFLVAAPEGIEAVKAVHPDVEIYTAAIDAQLNDKGYILPGLGDAGDRIFGTRVG.

Residues Arg78, Arg103, and 130 to 138 (DPMLATGGT) each bind 5-phospho-alpha-D-ribose 1-diphosphate. Uracil is bound by residues Ile193 and 198-200 (GDA). Position 199 (Asp199) interacts with 5-phospho-alpha-D-ribose 1-diphosphate.

The protein belongs to the UPRTase family. Mg(2+) serves as cofactor.

It catalyses the reaction UMP + diphosphate = 5-phospho-alpha-D-ribose 1-diphosphate + uracil. It participates in pyrimidine metabolism; UMP biosynthesis via salvage pathway; UMP from uracil: step 1/1. Its activity is regulated as follows. Allosterically activated by GTP. In terms of biological role, catalyzes the conversion of uracil and 5-phospho-alpha-D-ribose 1-diphosphate (PRPP) to UMP and diphosphate. The polypeptide is Uracil phosphoribosyltransferase (Stenotrophomonas maltophilia (strain R551-3)).